Here is a 448-residue protein sequence, read N- to C-terminus: Probable rhamnogalacturonase E (448 aa).

A signal peptide spans 1 to 22; the sequence is MTWSTSFLVATSLLSIINSVHA. A disulfide bridge connects residues Cys-43 and Cys-69. N-linked (GlcNAc...) asparagine glycosylation is found at Asn-54, Asn-92, and Asn-131. Asp-221 acts as the Proton donor in catalysis. Cysteines 223 and 240 form a disulfide. Asn-256 and Asn-284 each carry an N-linked (GlcNAc...) asparagine glycan. The active site involves His-296. N-linked (GlcNAc...) asparagine glycans are attached at residues Asn-323 and Asn-328. 2 cysteine pairs are disulfide-bonded: Cys-346-Cys-352 and Cys-374-Cys-382.

Belongs to the glycosyl hydrolase 28 family.

The protein resides in the secreted. In terms of biological role, pectinolytic enzymes consist of four classes of enzymes: pectine lyase, polygalacturonase, pectin methylesterase and rhamnogalacturonase. Hydrolyzes alpha-D-galacturonopyranosyl-(1,2)-alpha-L-rhamnopyranosyl linkages in the backbone of the hairy regions of pectins. The chain is Probable rhamnogalacturonase E (rhgE) from Aspergillus niger (strain ATCC MYA-4892 / CBS 513.88 / FGSC A1513).